A 60-amino-acid polypeptide reads, in one-letter code: Large ribosomal subunit protein bL32 (60 aa).

Basic residues predominate over residues 1-22 (MAVPKKKTSKSRRDMRRSHHAL). The disordered stretch occupies residues 1–27 (MAVPKKKTSKSRRDMRRSHHALKGSAY).

This sequence belongs to the bacterial ribosomal protein bL32 family.

The polypeptide is Large ribosomal subunit protein bL32 (Rhodospirillum centenum (strain ATCC 51521 / SW)).